We begin with the raw amino-acid sequence, 636 residues long: p-hydroxybenzoate-m-hydroxylase A (636 aa).

FAD is bound by residues 10-39 (DIVIVGAGPVGIVLSLCMSRWGYKVKHIDN), 241-243 (RLY), Y289, and D310. A helical membrane pass occupies residues 11–28 (IVIVGAGPVGIVLSLCMS).

The protein belongs to the PheA/TfdB FAD monooxygenase family. FAD serves as cofactor.

The protein localises to the membrane. It catalyses the reaction 4-hydroxybenzoate + NADH + O2 + H(+) = 3,4-dihydroxybenzoate + NAD(+) + H2O. It carries out the reaction 4-hydroxybenzoate + NADPH + O2 + H(+) = 3,4-dihydroxybenzoate + NADP(+) + H2O. In terms of biological role, FAD-dependent monooxygenase; part of the benzoic acid degradation pathway also known as the protocatechuic acid pathway. Benzoic acid debradation begins with the conversion of benzoic acid into 4-hydroxybenzoic acid through hydroxylation by the benzoate-4-monooxygenase bphA, and its partner NADPH-cytochrome P450 reductase cprA which act as a mediator in electron donation from NADPH. 4-Hydroxybenzoic acid is then converted into 3,4-dihydroxybenzoic acid (also called protocatechuic acid) by the p-hydroxybenzoate-m-hydroxylase phhA. Protocatechuic acid is converted into 3-carboxy-cis,cis-muconic acid by the intradiol ring-cleavage dioxygenase prcA, which is further metabolized through the 3-oxoadipate pathway to finally enter the tricarboxylic acid cycle (TCA). The sequence is that of p-hydroxybenzoate-m-hydroxylase A from Aspergillus niger (strain ATCC MYA-4892 / CBS 513.88 / FGSC A1513).